Reading from the N-terminus, the 123-residue chain is Small ribosomal subunit protein bS16 (123 aa).

Residues proline 86–glutamate 123 are disordered. The segment covering lysine 93–glutamine 102 has biased composition (low complexity). A compositionally biased stretch (basic and acidic residues) spans arginine 104–alanine 113. The segment covering alanine 114–glutamate 123 has biased composition (low complexity).

Belongs to the bacterial ribosomal protein bS16 family.

The polypeptide is Small ribosomal subunit protein bS16 (Paramagnetospirillum magneticum (strain ATCC 700264 / AMB-1) (Magnetospirillum magneticum)).